The chain runs to 49 residues: Large ribosomal subunit protein bL33A (49 aa).

Positions 20–49 are disordered; sequence KKNKRNNPDRVEFKKYCPRDKKSTLHRETK. Over residues 25–49 the composition is skewed to basic and acidic residues; it reads NNPDRVEFKKYCPRDKKSTLHRETK.

Belongs to the bacterial ribosomal protein bL33 family. As to quaternary structure, part of the 50S ribosomal subunit. Interacts with VmlR.

The polypeptide is Large ribosomal subunit protein bL33A (rpmGA) (Bacillus subtilis (strain 168)).